Consider the following 72-residue polypeptide: Long neurotoxin OH-5 (72 aa).

Disulfide bonds link C3-C22, C15-C43, C28-C32, C47-C58, and C59-C64.

The protein belongs to the three-finger toxin family. Long-chain subfamily. Type II alpha-neurotoxin sub-subfamily. As to expression, expressed by the venom gland.

It is found in the secreted. Binds with high affinity to muscular (alpha-1/CHRNA1) and neuronal (alpha-7/CHRNA7) nicotinic acetylcholine receptor (nAChR) and inhibits acetylcholine from binding to the receptor, thereby impairing neuromuscular and neuronal transmission. The protein is Long neurotoxin OH-5 of Ophiophagus hannah (King cobra).